We begin with the raw amino-acid sequence, 217 residues long: Ribonuclease T (217 aa).

Positions 20 to 195 constitute an Exonuclease domain; that stretch reads VVVDVETAGF…YDTEKTAELF (176 aa). Mg(2+)-binding residues include aspartate 23, glutamate 25, histidine 182, and aspartate 187. The Proton donor/acceptor role is filled by histidine 182.

The protein belongs to the RNase T family. Homodimer. Mg(2+) is required as a cofactor.

Functionally, trims short 3' overhangs of a variety of RNA species, leaving a one or two nucleotide 3' overhang. Responsible for the end-turnover of tRNA: specifically removes the terminal AMP residue from uncharged tRNA (tRNA-C-C-A). Also appears to be involved in tRNA biosynthesis. The polypeptide is Ribonuclease T (Vibrio vulnificus (strain CMCP6)).